The sequence spans 221 residues: Probable nicotinate-nucleotide adenylyltransferase (221 aa).

Belongs to the NadD family.

It catalyses the reaction nicotinate beta-D-ribonucleotide + ATP + H(+) = deamido-NAD(+) + diphosphate. Its pathway is cofactor biosynthesis; NAD(+) biosynthesis; deamido-NAD(+) from nicotinate D-ribonucleotide: step 1/1. Catalyzes the reversible adenylation of nicotinate mononucleotide (NaMN) to nicotinic acid adenine dinucleotide (NaAD). The chain is Probable nicotinate-nucleotide adenylyltransferase from Marinomonas sp. (strain MWYL1).